A 268-amino-acid polypeptide reads, in one-letter code: Putative sgc region protein SgcQ (268 aa).

It belongs to the BtpA family.

The chain is Putative sgc region protein SgcQ (sgcQ) from Escherichia coli (strain K12).